We begin with the raw amino-acid sequence, 310 residues long: Beta sliding clamp (310 aa).

Belongs to the beta sliding clamp family. In terms of assembly, forms a ring-shaped head-to-tail homodimer around DNA which binds and tethers DNA polymerases and other proteins to the DNA. The DNA replisome complex has a single clamp-loading complex (3 tau and 1 each of delta, delta', psi and chi subunits) which binds 3 Pol III cores (1 core on the leading strand and 2 on the lagging strand) each with a beta sliding clamp dimer. Additional proteins in the replisome are other copies of gamma, psi and chi, Ssb, DNA helicase and RNA primase.

The protein localises to the cytoplasm. Its function is as follows. Confers DNA tethering and processivity to DNA polymerases and other proteins. Acts as a clamp, forming a ring around DNA (a reaction catalyzed by the clamp-loading complex) which diffuses in an ATP-independent manner freely and bidirectionally along dsDNA. Initially characterized for its ability to contact the catalytic subunit of DNA polymerase III (Pol III), a complex, multichain enzyme responsible for most of the replicative synthesis in bacteria; Pol III exhibits 3'-5' exonuclease proofreading activity. The beta chain is required for initiation of replication as well as for processivity of DNA replication. The protein is Beta sliding clamp (dnaN) of Micrococcus luteus (Micrococcus lysodeikticus).